The following is a 61-amino-acid chain: Small ribosomal subunit protein uS14 (61 aa).

Zn(2+)-binding residues include Cys-24, Cys-27, Cys-40, and Cys-43.

Belongs to the universal ribosomal protein uS14 family. Zinc-binding uS14 subfamily. Part of the 30S ribosomal subunit. Contacts proteins S3 and S10. The cofactor is Zn(2+).

In terms of biological role, binds 16S rRNA, required for the assembly of 30S particles and may also be responsible for determining the conformation of the 16S rRNA at the A site. This is Small ribosomal subunit protein uS14 from Petrotoga mobilis (strain DSM 10674 / SJ95).